Consider the following 68-residue polypeptide: MSGFSSVAATKKVVQQLQLEAGLNSVKVSQAAADLKQFCLQNAQHDPLLTGVSSSTNPFRPQKVCSFL.

In terms of domain architecture, G protein gamma spans 3–68 (GFSSVAATKK…FRPQKVCSFL (66 aa)). Cys65 bears the Cysteine methyl ester mark. Cys65 is lipidated: S-geranylgeranyl cysteine. Residues 66-68 (SFL) constitute a propeptide, removed in mature form.

The protein belongs to the G protein gamma family. As to quaternary structure, g proteins are composed of 3 units; alpha, beta and gamma.

It is found in the cell membrane. Guanine nucleotide-binding proteins (G proteins) are involved as a modulator or transducer in various transmembrane signaling systems. The beta and gamma chains are required for the GTPase activity, for replacement of GDP by GTP, and for G protein-effector interaction. The polypeptide is Guanine nucleotide-binding protein G(I)/G(S)/G(O) subunit gamma-5B (Homo sapiens (Human)).